A 96-amino-acid polypeptide reads, in one-letter code: Putative pterin-4-alpha-carbinolamine dehydratase (96 aa).

This sequence belongs to the pterin-4-alpha-carbinolamine dehydratase family.

The enzyme catalyses (4aS,6R)-4a-hydroxy-L-erythro-5,6,7,8-tetrahydrobiopterin = (6R)-L-erythro-6,7-dihydrobiopterin + H2O. The protein is Putative pterin-4-alpha-carbinolamine dehydratase of Prochlorococcus marinus (strain SARG / CCMP1375 / SS120).